The primary structure comprises 215 residues: LysM and putative peptidoglycan-binding domain-containing protein 1 (215 aa).

The LysM domain occupies Leu37–Ile81. Polar residues-rich tracts occupy residues Gly86–Glu103 and Gly173–Ser189. Disordered stretches follow at residues Gly86–Phe133 and Ala148–Ser203.

The chain is LysM and putative peptidoglycan-binding domain-containing protein 1 (lysmd1) from Xenopus laevis (African clawed frog).